Reading from the N-terminus, the 129-residue chain is Regulator of ribonuclease activity B (129 aa).

Belongs to the RraB family. As to quaternary structure, interacts with the C-terminal region of Rne.

The protein localises to the cytoplasm. Functionally, globally modulates RNA abundance by binding to RNase E (Rne) and regulating its endonucleolytic activity. Can modulate Rne action in a substrate-dependent manner by altering the composition of the degradosome. The sequence is that of Regulator of ribonuclease activity B from Shewanella denitrificans (strain OS217 / ATCC BAA-1090 / DSM 15013).